The primary structure comprises 77 residues: Antitoxin VapB2 (77 aa).

The 43-residue stretch at 4–46 (ASVFMTNRSQAVRLPAEVRFSEEIKKLSVRVSGSDRILSPLNQ) folds into the SpoVT-AbrB domain.

It belongs to the VapB family. Probably forms a complex with cognate toxin VapC2.

In terms of biological role, antitoxin component of a type II toxin-antitoxin (TA) system. Neutralizes the effect of cognate toxin VapC2 but not non-cognate toxin VapC2. The chain is Antitoxin VapB2 from Haemophilus influenzae (strain 86-028NP).